Consider the following 470-residue polypeptide: Cyclin-dependent kinase E-1 (470 aa).

Residues 25 to 333 enclose the Protein kinase domain; that stretch reads YNLVGKIGEG…ASQALEHEYF (309 aa). ATP contacts are provided by residues 31–39 and Lys-55; that span reads IGEGTYGLV. At Tyr-36 the chain carries Phosphotyrosine. The active-site Proton acceptor is Asp-154. The tract at residues 428-470 is disordered; it reads LNPSVPLQQQRGMAQPHQQQQLRRKDPGMGMSGYAPPNKSRRL. The segment covering 432 to 448 has biased composition (polar residues); it reads VPLQQQRGMAQPHQQQQ.

The protein belongs to the protein kinase superfamily. CMGC Ser/Thr protein kinase family. CDC2/CDKX subfamily. Interacts with MED14, HDA19 and LUG. Interacts with KIN10. Expressed in roots, leaves and stems. Expressed in young dividing tissue, such as shoot and root tips, lateral root primordia, young leaves and flowers. Expressed in the inflorescence meristem, inflorescence stem and young flowers.

The protein localises to the nucleus. It catalyses the reaction L-seryl-[protein] + ATP = O-phospho-L-seryl-[protein] + ADP + H(+). The enzyme catalyses L-threonyl-[protein] + ATP = O-phospho-L-threonyl-[protein] + ADP + H(+). The catalysed reaction is [DNA-directed RNA polymerase] + ATP = phospho-[DNA-directed RNA polymerase] + ADP + H(+). Involved in cell differentiation. Required for the specification of stamen and carpel identities and for the proper termination of stem cells in the floral meristem. This Arabidopsis thaliana (Mouse-ear cress) protein is Cyclin-dependent kinase E-1 (CDKE-1).